The chain runs to 89 residues: Large ribosomal subunit protein bL27 (89 aa).

Positions 1–22 (MAHKKAGGSSRNGRDSESKRLG) are disordered.

It belongs to the bacterial ribosomal protein bL27 family.

The polypeptide is Large ribosomal subunit protein bL27 (Rhizobium etli (strain CIAT 652)).